Consider the following 289-residue polypeptide: RING-H2 finger protein ATL29 (289 aa).

A helical membrane pass occupies residues 25 to 45 (VILTVILLVFFFIGFFTLYFC). The segment at 110–152 (CAICLLEFDGDHVLRLLTTCYHVFHQECIDLWFESHRTCPVCR) adopts an RING-type; atypical zinc-finger fold. The interval 179–237 (TSDDEEDDHHRQQTTTQIDTWPSSGQTSSIKKEQNLPEKFSRSHSTGHSIVRNKPEEED) is disordered. Polar residues predominate over residues 191–207 (QTTTQIDTWPSSGQTSS). The segment covering 208-219 (IKKEQNLPEKFS) has biased composition (basic and acidic residues).

It belongs to the RING-type zinc finger family. ATL subfamily.

It is found in the membrane. The catalysed reaction is S-ubiquitinyl-[E2 ubiquitin-conjugating enzyme]-L-cysteine + [acceptor protein]-L-lysine = [E2 ubiquitin-conjugating enzyme]-L-cysteine + N(6)-ubiquitinyl-[acceptor protein]-L-lysine.. Its pathway is protein modification; protein ubiquitination. This chain is RING-H2 finger protein ATL29 (ATL29), found in Arabidopsis thaliana (Mouse-ear cress).